The following is a 443-amino-acid chain: Phosphatidate cytidylyltransferase 2 (443 aa).

The span at M1–A38 shows a compositional bias: basic and acidic residues. A disordered region spans residues M1–P51. S20 is subject to Phosphoserine. At T30 the chain carries Phosphothreonine. Phosphoserine is present on residues S32, S34, and S36. T50 carries the post-translational modification Phosphothreonine. 6 helical membrane passes run M78–M98, W129–F149, H165–V185, L212–I232, G261–S281, and S338–F358.

Belongs to the CDS family. Homodimer.

Its subcellular location is the endoplasmic reticulum membrane. The catalysed reaction is a 1,2-diacyl-sn-glycero-3-phosphate + CTP + H(+) = a CDP-1,2-diacyl-sn-glycerol + diphosphate. It carries out the reaction 1-octadecanoyl-2-(5Z,8Z,11Z,14Z-eicosatetraenoyl)-sn-glycero-3-phosphate + CTP + H(+) = 1-octadecanoyl-2-(5Z,8Z,11Z,14Z-eicosatetraenoyl)-sn-glycero-3-cytidine-5'-diphosphate + diphosphate. It catalyses the reaction 1-octadecanoyl-2-(9Z,12Z-octadecadienoyl)-sn-glycero-3-phosphate + CTP + H(+) = 1-octadecanoyl-2-(9Z,12Z-octadecadienoyl)-sn-glycero-3-cytidine-5'-diphosphate + diphosphate. The enzyme catalyses 1-hexadecanoyl-2-(5Z,8Z,11Z,14Z-eicosatetraenoyl)-sn-glycero-3-phosphate + CTP + H(+) = 1-hexadecanoyl-2-(5Z,8Z,11Z,14Z-eicosatetraenoyl)-sn-glycero-3-cytidine-5'-diphosphate + diphosphate. The catalysed reaction is 1,2-di-(5Z,8Z,11Z,14Z)-eicosatetraenoyl-sn-glycero-3-phosphate + CTP + H(+) = 1,2-di-(5Z,8Z,11Z,14Z-eicosatetraenoyl)-sn-glycero-3-cytidine-5'-diphosphate + diphosphate. It carries out the reaction 1-octadecanoyl-2-(9Z-octadecenoyl)-sn-glycero-3-phosphate + CTP + H(+) = 1-octadecanoyl-2-(9Z-octadecenoyl)-sn-glycero-3-cytidine-5'-diphosphate + diphosphate. It catalyses the reaction 1-octadecanoyl-2-(4Z,7Z,10Z,13Z,16Z,19Z-docosahexaenoyl)-sn-glycero-3-phosphate + CTP + H(+) = 1-octadecanoyl-2-(4Z,7Z,10Z,13Z,16Z,19Z-docosahexaenoyl)-sn-glycero-3-cytidine-5'-diphosphate + diphosphate. The enzyme catalyses 1,2-di-(9Z,12Z-octadecadienoyl)-sn-glycero-3-phosphate + CTP + H(+) = 1,2-di-(9Z,12Z-octadecadienoyl)-sn-glycero-3-cytidine-5'-diphosphate + diphosphate. The catalysed reaction is 1,2-di-(9Z-octadecenoyl)-sn-glycero-3-phosphate + CTP + H(+) = 1,2-di-(9Z-octadecenoyl)-sn-glycero-3-cytidine-5'-diphosphate + diphosphate. It functions in the pathway phospholipid metabolism; CDP-diacylglycerol biosynthesis; CDP-diacylglycerol from sn-glycerol 3-phosphate: step 3/3. Catalyzes the conversion of phosphatidic acid (PA) to CDP-diacylglycerol (CDP-DAG), an essential intermediate in the synthesis of phosphatidylglycerol, cardiolipin and phosphatidylinositol. Exhibits specificity for the nature of the acyl chains at the sn-1 and sn-2 positions in the substrate, PA and the preferred acyl chain composition is 1-stearoyl-2-arachidonoyl-sn-phosphatidic acid. Plays an important role in regulating the growth and maturation of lipid droplets which are storage organelles at the center of lipid and energy homeostasis. The chain is Phosphatidate cytidylyltransferase 2 from Rattus norvegicus (Rat).